A 198-amino-acid polypeptide reads, in one-letter code: MTLILASQSSGRAAMLRAAGLAFETTAAHVDEEMLTASLRAAGQTPRNIADALAEAKAVKIASRLPGVTVIGADSTLALDDGSMLAKPETPEEAADHLRRMAGRRHRLFSAAVAARDGAPIWRAIGEAKLWIRPLSDAFIADYVAQNWDSIRWTVGCYEIEGAGVQLFDRVEGDPWTIIGMPMLPLLTWLRATGLAPQ.

Asp74 serves as the catalytic Proton acceptor.

Belongs to the Maf family. It depends on a divalent metal cation as a cofactor.

It localises to the cytoplasm. The enzyme catalyses a ribonucleoside 5'-triphosphate + H2O = a ribonucleoside 5'-phosphate + diphosphate + H(+). It catalyses the reaction a 2'-deoxyribonucleoside 5'-triphosphate + H2O = a 2'-deoxyribonucleoside 5'-phosphate + diphosphate + H(+). Nucleoside triphosphate pyrophosphatase. May have a dual role in cell division arrest and in preventing the incorporation of modified nucleotides into cellular nucleic acids. In Sphingopyxis alaskensis (strain DSM 13593 / LMG 18877 / RB2256) (Sphingomonas alaskensis), this protein is Nucleoside triphosphate pyrophosphatase.